Here is a 299-residue protein sequence, read N- to C-terminus: Delta-9 desaturase-like 1 protein (299 aa).

The next 2 helical transmembrane spans lie at 31–51 and 55–75; these read IDIA…LAPF and WEAL…ITFS. Positions 77-82 match the Histidine box-1 motif; the sequence is HRNLTH. The Histidine box-2 motif lies at 114-118; the sequence is HRFHH. 2 helical membrane passes run 174-194 and 198-218; these read IGLH…LPYL and VGVG…ACHI. The Histidine box-3 motif lies at 246-250; sequence HNNHH. Residues 262–282 traverse the membrane as a helical segment; that stretch reads WYQVDLTWYLICFFQALGLAT.

This sequence belongs to the fatty acid desaturase type 1 family. The cofactor is Fe cation.

The protein localises to the endoplasmic reticulum membrane. The protein operates within lipid metabolism; polyunsaturated fatty acid biosynthesis. The chain is Delta-9 desaturase-like 1 protein from Arabidopsis thaliana (Mouse-ear cress).